Consider the following 296-residue polypeptide: tRNA dimethylallyltransferase (296 aa).

2-9 contributes to the ATP binding site; sequence GPTASGKT. Substrate is bound at residue 4–9; the sequence is TASGKT. 3 interaction with substrate tRNA regions span residues 27–30, 151–155, and 232–237; these read DSAL, QRLSR, and RCVGYR.

Belongs to the IPP transferase family. As to quaternary structure, monomer. It depends on Mg(2+) as a cofactor.

It catalyses the reaction adenosine(37) in tRNA + dimethylallyl diphosphate = N(6)-dimethylallyladenosine(37) in tRNA + diphosphate. Functionally, catalyzes the transfer of a dimethylallyl group onto the adenine at position 37 in tRNAs that read codons beginning with uridine, leading to the formation of N6-(dimethylallyl)adenosine (i(6)A). This Shewanella sp. (strain ANA-3) protein is tRNA dimethylallyltransferase.